We begin with the raw amino-acid sequence, 618 residues long: uncharacterized protein (618 aa).

Disordered regions lie at residues 70–118 (SSEY…SLPR), 330–352 (LTARTEEEPERHVPEQAVPEVPC), 456–552 (TLPV…PILT), and 587–618 (IPSDAESDCLDPPEQDKCEFYTSDPSHSLKTL). Basic and acidic residues-rich tracts occupy residues 74 to 84 (KGTRRDSRGYE) and 333 to 343 (RTEEEPERHVP). A compositionally biased stretch (low complexity) spans 463–481 (TSRPQSPSSLSSKTTGLPL). Composition is skewed to polar residues over residues 485-516 (KPTSLMTDRTSPSNSSSRAQTPSRPITPNSLM) and 609-618 (SDPSHSLKTL).

This is an uncharacterized protein from Danio rerio (Zebrafish).